Consider the following 485-residue polypeptide: Amyloid beta A4 precursor protein-binding family B member 1-interacting protein (485 aa).

The span at 84–107 (QAQKTSGNQQSVVTQPSTGTNNDF) shows a compositional bias: polar residues. Residues 84-157 (QAQKTSGNQQ…LSQEEQEARA (74 aa)) form a disordered region. The span at 125–147 (LPPPPPAPDLDLPPPPPPPPPEP) shows a compositional bias: pro residues. A Ras-associating domain is found at 175 to 262 (KKLVVKVHMY…KVLFLEKKEK (88 aa)). The PH domain maps to 305-414 (VPELEGALYL…WVTGIRIAKY (110 aa)).

It belongs to the MRL family.

It is found in the cell membrane. It localises to the cytoplasm. Its subcellular location is the cytoskeleton. Functionally, appears to function in the signal transduction from Ras activation to actin cytoskeletal remodeling. The chain is Amyloid beta A4 precursor protein-binding family B member 1-interacting protein (APBB1IP) from Gallus gallus (Chicken).